Consider the following 119-residue polypeptide: Ribonuclease P protein component (119 aa).

Belongs to the RnpA family. Consists of a catalytic RNA component (M1 or rnpB) and a protein subunit.

It catalyses the reaction Endonucleolytic cleavage of RNA, removing 5'-extranucleotides from tRNA precursor.. RNaseP catalyzes the removal of the 5'-leader sequence from pre-tRNA to produce the mature 5'-terminus. It can also cleave other RNA substrates such as 4.5S RNA. The protein component plays an auxiliary but essential role in vivo by binding to the 5'-leader sequence and broadening the substrate specificity of the ribozyme. This Borreliella burgdorferi (strain ATCC 35210 / DSM 4680 / CIP 102532 / B31) (Borrelia burgdorferi) protein is Ribonuclease P protein component.